The primary structure comprises 349 residues: tRNA uridine(34) hydroxylase (349 aa).

In terms of domain architecture, Rhodanese spans 146–240; it reads DDPDAVFIDM…YARRAREQGL (95 aa). Cys-200 acts as the Cysteine persulfide intermediate in catalysis. A compositionally biased stretch (basic and acidic residues) spans 316–328; that stretch reads EEQRRRRAGRENG. A disordered region spans residues 316–349; that stretch reads EEQRRRRAGRENGNKIFNKSRGRLNTKLGIPDPE.

The protein belongs to the TrhO family.

It catalyses the reaction uridine(34) in tRNA + AH2 + O2 = 5-hydroxyuridine(34) in tRNA + A + H2O. In terms of biological role, catalyzes oxygen-dependent 5-hydroxyuridine (ho5U) modification at position 34 in tRNAs. This Enterobacter sp. (strain 638) protein is tRNA uridine(34) hydroxylase.